The primary structure comprises 291 residues: Shikimate dehydrogenase (NADP(+)) (291 aa).

Residues 22 to 24 (SLS) and Thr-69 contribute to the shikimate site. The active-site Proton acceptor is the Lys-73. Residues Asn-94 and Asp-110 each contribute to the shikimate site. NADP(+)-binding positions include 131–135 (GSGGA) and Leu-226. Residue Tyr-228 coordinates shikimate. Gly-249 provides a ligand contact to NADP(+).

It belongs to the shikimate dehydrogenase family. Homodimer.

It carries out the reaction shikimate + NADP(+) = 3-dehydroshikimate + NADPH + H(+). It functions in the pathway metabolic intermediate biosynthesis; chorismate biosynthesis; chorismate from D-erythrose 4-phosphate and phosphoenolpyruvate: step 4/7. Its function is as follows. Involved in the biosynthesis of the chorismate, which leads to the biosynthesis of aromatic amino acids. Catalyzes the reversible NADPH linked reduction of 3-dehydroshikimate (DHSA) to yield shikimate (SA). The sequence is that of Shikimate dehydrogenase (NADP(+)) from Synechococcus sp. (strain JA-3-3Ab) (Cyanobacteria bacterium Yellowstone A-Prime).